A 571-amino-acid chain; its full sequence is Proline--tRNA ligase (571 aa).

It belongs to the class-II aminoacyl-tRNA synthetase family. ProS type 1 subfamily. In terms of assembly, homodimer.

Its subcellular location is the cytoplasm. It catalyses the reaction tRNA(Pro) + L-proline + ATP = L-prolyl-tRNA(Pro) + AMP + diphosphate. Functionally, catalyzes the attachment of proline to tRNA(Pro) in a two-step reaction: proline is first activated by ATP to form Pro-AMP and then transferred to the acceptor end of tRNA(Pro). As ProRS can inadvertently accommodate and process non-cognate amino acids such as alanine and cysteine, to avoid such errors it has two additional distinct editing activities against alanine. One activity is designated as 'pretransfer' editing and involves the tRNA(Pro)-independent hydrolysis of activated Ala-AMP. The other activity is designated 'posttransfer' editing and involves deacylation of mischarged Ala-tRNA(Pro). The misacylated Cys-tRNA(Pro) is not edited by ProRS. This chain is Proline--tRNA ligase, found in Vibrio vulnificus (strain YJ016).